Consider the following 171-residue polypeptide: Photosystem I assembly protein Ycf3 (171 aa).

TPR repeat units lie at residues 35 to 68 (AFTY…EIDP), 72 to 105 (SYIL…NPSL), and 120 to 153 (GEQA…APNN).

The protein belongs to the Ycf3 family.

The protein localises to the plastid. It is found in the chloroplast thylakoid membrane. Its function is as follows. Essential for the assembly of the photosystem I (PSI) complex. May act as a chaperone-like factor to guide the assembly of the PSI subunits. The protein is Photosystem I assembly protein Ycf3 of Psilotum nudum (Whisk fern).